The primary structure comprises 434 residues: Trigger factor 2 (434 aa).

Residues 164–247 (GDTVTVDYDC…VKKVERIEIL (84 aa)) form the PPIase FKBP-type domain.

Belongs to the FKBP-type PPIase family. Tig subfamily.

Its subcellular location is the cytoplasm. The enzyme catalyses [protein]-peptidylproline (omega=180) = [protein]-peptidylproline (omega=0). Involved in protein export. Acts as a chaperone by maintaining the newly synthesized protein in an open conformation. Functions as a peptidyl-prolyl cis-trans isomerase. This Desulfitobacterium hafniense (strain Y51) protein is Trigger factor 2.